The sequence spans 430 residues: Glutamate-1-semialdehyde 2,1-aminomutase (430 aa).

At K265 the chain carries N6-(pyridoxal phosphate)lysine.

Belongs to the class-III pyridoxal-phosphate-dependent aminotransferase family. HemL subfamily. As to quaternary structure, homodimer. Pyridoxal 5'-phosphate serves as cofactor.

The protein localises to the cytoplasm. It catalyses the reaction (S)-4-amino-5-oxopentanoate = 5-aminolevulinate. The protein operates within porphyrin-containing compound metabolism; protoporphyrin-IX biosynthesis; 5-aminolevulinate from L-glutamyl-tRNA(Glu): step 2/2. The chain is Glutamate-1-semialdehyde 2,1-aminomutase from Shewanella sp. (strain ANA-3).